The following is a 173-amino-acid chain: NADH-ubiquinone oxidoreductase chain 6 (173 aa).

The next 5 helical transmembrane spans lie at 1–21 (MVYF…AVAS), 25–45 (PYFA…LLVG), 53–73 (LVLF…TAAL), 82–102 (WGDW…FFVG), and 141–161 (GIML…ILEL).

The protein belongs to the complex I subunit 6 family.

Its subcellular location is the mitochondrion membrane. The catalysed reaction is a ubiquinone + NADH + 5 H(+)(in) = a ubiquinol + NAD(+) + 4 H(+)(out). Core subunit of the mitochondrial membrane respiratory chain NADH dehydrogenase (Complex I) that is believed to belong to the minimal assembly required for catalysis. Complex I functions in the transfer of electrons from NADH to the respiratory chain. The immediate electron acceptor for the enzyme is believed to be ubiquinone. This Squalus acanthias (Spiny dogfish) protein is NADH-ubiquinone oxidoreductase chain 6 (MT-ND6).